Reading from the N-terminus, the 75-residue chain is UPF0235 protein Mvan_2846 (75 aa).

Belongs to the UPF0235 family.

This Mycolicibacterium vanbaalenii (strain DSM 7251 / JCM 13017 / BCRC 16820 / KCTC 9966 / NRRL B-24157 / PYR-1) (Mycobacterium vanbaalenii) protein is UPF0235 protein Mvan_2846.